An 809-amino-acid polypeptide reads, in one-letter code: Histone H2A deubiquitinase MYSM1 (809 aa).

In terms of domain architecture, SANT spans 33 to 78; the sequence is GYEPNWMFDHGQEIYGRSWTSISQFVQTRTPLQVKNYARHFFKTKV. Disordered stretches follow at residues 113-140 and 320-378; these read PAQPAVVTSDDTSTGENVMEETEAVTED and DATD…KETY. Basic and acidic residues-rich tracts occupy residues 335–345 and 363–378; these read TLDHPEDRSKP and TDGRTFSDSDSGKETY. The region spanning 410–508 is the SWIRM domain; it reads FKKPTEEVVL…FGCEEANRGE (99 aa). The 128-residue stretch at 592-719 folds into the MPN domain; it reads VKIHATALVT…YSSTRISPLS (128 aa). Residues H671, H673, and D684 each contribute to the Zn(2+) site. The JAMM motif signature appears at 671-684; sequence HSHPTFAPNPSVRD.

This sequence belongs to the peptidase M67A family. MYSM1 subfamily.

It is found in the nucleus. Its function is as follows. Metalloprotease that specifically deubiquitinates monoubiquitinated histone H2A, a specific tag for epigenetic transcriptional repression, thereby acting as a coactivator. Preferentially deubiquitinates monoubiquitinated H2A in hyperacetylated nucleosomes. Deubiquitination of histone H2A leads to facilitate the phosphorylation and dissociation of histone H1 from the nucleosome. Acts as a coactivator by participating in the initiation and elongation steps of androgen receptor (AR)-induced gene activation. The sequence is that of Histone H2A deubiquitinase MYSM1 (MYSM1) from Branchiostoma floridae (Florida lancelet).